We begin with the raw amino-acid sequence, 383 residues long: Acetylornithine deacetylase (383 aa).

Residue histidine 80 coordinates Zn(2+). The active site involves aspartate 82. Aspartate 112 is a binding site for Zn(2+). Glutamate 144 is an active-site residue. Zn(2+)-binding residues include glutamate 145, glutamate 169, and histidine 355.

This sequence belongs to the peptidase M20A family. ArgE subfamily. Homodimer. Zn(2+) is required as a cofactor. Co(2+) serves as cofactor. It depends on glutathione as a cofactor.

It localises to the cytoplasm. The enzyme catalyses N(2)-acetyl-L-ornithine + H2O = L-ornithine + acetate. It functions in the pathway amino-acid biosynthesis; L-arginine biosynthesis; L-ornithine from N(2)-acetyl-L-ornithine (linear): step 1/1. Its function is as follows. Catalyzes the hydrolysis of the amide bond of N(2)-acetylated L-amino acids. Cleaves the acetyl group from N-acetyl-L-ornithine to form L-ornithine, an intermediate in L-arginine biosynthesis pathway, and a branchpoint in the synthesis of polyamines. This is Acetylornithine deacetylase from Escherichia coli (strain K12 / MC4100 / BW2952).